Consider the following 410-residue polypeptide: Lipid droplet-regulating VLDL assembly factor AUP1 (410 aa).

Position 1 is an N-acetylmethionine (Met-1). Residues Met-1 to Gly-20 lie on the Cytoplasmic side of the membrane. Ser-5 carries the post-translational modification Phosphoserine. An intramembrane segment occupies Asp-21–Leu-41. At Arg-42–Asp-410 the chain is on the cytoplasmic side. The disordered stretch occupies residues Thr-255–Val-295. Ser-288 and Ser-292 each carry phosphoserine. One can recognise a CUE domain in the interval Gln-296–Val-338. A disordered region spans residues Gln-350–Gln-369. Ser-363 is modified (phosphoserine). Thr-367 bears the Phosphothreonine mark.

This sequence belongs to the AUP1 family. Identified in a complex that contains SEL1L, OS9, FAF2/UBXD8, UBE2J1/UBC6E and AUP1. Interacts with the cytoplasmic tail of ITGA2B, ITGA1, ITGA2, ITGA5, ITGAV and ITGAM. Interacts (via C-terminus) with ubiquitin-conjugating enzyme UBE2G2; the interaction recruits UBE2G2 to lipid droplets. Interacts with ubiquitin ligases AMFR/gp78 and RNF139/TRC8; this promotes interaction of UBE2G2 with AMFR and RNF139. Interacts with apolipoprotein APOB. As to quaternary structure, (Microbial infection) Interacts with Dengue virus NS4A; the interaction occurs in the presence of Dengue virus NS4B and induces lipophagy which facilitates production of virus progeny. In terms of processing, monoubiquitinated and diubiquitinated. Post-translationally, (Microbial infection) Not ubiquitinated following Dengue virus infection. In terms of tissue distribution, detected in blood platelets and leukocytes (at protein level). Ubiquitous. Highly expressed in placenta, liver, kidney, skeletal muscle, heart and brain.

It localises to the endoplasmic reticulum membrane. The protein resides in the lipid droplet. It is found in the cytoplasmic vesicle. The protein localises to the autophagosome. Its function is as follows. Plays a role in the translocation of terminally misfolded proteins from the endoplasmic reticulum lumen to the cytoplasm and their degradation by the proteasome. Plays a role in lipid droplet formation. Induces lipid droplet clustering. Recruits ubiquitin-conjugating enzyme UBE2G2 to lipid droplets which facilitates its interaction with ubiquitin ligases AMFR/gp78 and RNF139/TRC8, leading to sterol-induced ubiquitination of HMGCR and its subsequent proteasomal degradation. Also required for the degradation of INSIG1, SREBF1 and SREBF2. Plays a role in regulating assembly and secretion of very low density lipoprotein particles and stability of apolipoprotein APOB. Functionally, (Microbial infection) Following Dengue virus infection, required for induction of lipophagy which facilitates production of virus progeny particles. This Homo sapiens (Human) protein is Lipid droplet-regulating VLDL assembly factor AUP1.